A 140-amino-acid chain; its full sequence is Large ribosomal subunit protein uL16 (140 aa).

Belongs to the universal ribosomal protein uL16 family. Part of the 50S ribosomal subunit.

Binds 23S rRNA and is also seen to make contacts with the A and possibly P site tRNAs. This Geotalea uraniireducens (strain Rf4) (Geobacter uraniireducens) protein is Large ribosomal subunit protein uL16.